The primary structure comprises 340 residues: MSELEQLRQEAEQLRNQIQDARKACNDATLVQITSNMDSVGRIQMRTRRTLRGHLAKIYAMHWGYDSRLLVSASQDGKLIIWDSYTTNKMHAIPLRSSWVMTCAYAPSGNYVACGGLDNICSIYNLKTREGNVRVSRELPGHTGYLSCCRFLDDGQIITSSGDTTCALWDIETGQQTTTFTGHSGDVMSLSLSPDLKTFVSGACDASSKLWDIRDGMCRQSFTGHISDINAVSFFPSGYAFATGSDDATCRLFDLRADQELLLYSHDNIICGITSVAFSKSGRLLLAGYDDFNCSVWDALKGGRAGVLAGHDNRVSCLGVTDDGMAVATGSWDSFLRIWN.

Ser2 carries the post-translational modification N-acetylserine. Residue Ser2 is modified to Phosphoserine. WD repeat units lie at residues 53–92 (GHLAKIYAMHWGYDSRLLVSASQDGKLIIWDSYTTNKMHA), 95–134 (LRSSWVMTCAYAPSGNYVACGGLDNICSIYNLKTREGNVR), 141–179 (GHTGYLSCCRFLDDGQIITSSGDTTCALWDIETGQQTTT), 182–221 (GHSGDVMSLSLSPDLKTFVSGACDASSKLWDIRDGMCRQS), and 224–263 (GHISDINAVSFFPSGYAFATGSDDATCRLFDLRADQELLL). The residue at position 266 (His266) is a Phosphohistidine. WD repeat units lie at residues 268–307 (NIICGITSVAFSKSGRLLLAGYDDFNCSVWDALKGGRAGV) and 310–339 (GHDNRVSCLGVTDDGMAVATGSWDSFLRIW).

It belongs to the WD repeat G protein beta family. G proteins are composed of 3 units, alpha, beta and gamma. Widely expressed in the brain. Highest levels found in the hippocampus and layers v and vi of the neocortex.

Functionally, guanine nucleotide-binding proteins (G proteins) are involved as a modulator or transducer in various transmembrane signaling systems. The beta and gamma chains are required for the GTPase activity, for replacement of GDP by GTP, and for G protein-effector interaction. This is Guanine nucleotide-binding protein subunit beta-4 (Gnb4) from Rattus norvegicus (Rat).